The following is a 291-amino-acid chain: 33 kDa chaperonin (291 aa).

2 cysteine pairs are disulfide-bonded: C235/C237 and C268/C271.

Belongs to the HSP33 family. Post-translationally, under oxidizing conditions two disulfide bonds are formed involving the reactive cysteines. Under reducing conditions zinc is bound to the reactive cysteines and the protein is inactive.

Its subcellular location is the cytoplasm. Redox regulated molecular chaperone. Protects both thermally unfolding and oxidatively damaged proteins from irreversible aggregation. Plays an important role in the bacterial defense system toward oxidative stress. This Bacillus velezensis (strain DSM 23117 / BGSC 10A6 / LMG 26770 / FZB42) (Bacillus amyloliquefaciens subsp. plantarum) protein is 33 kDa chaperonin.